The primary structure comprises 501 residues: Probable cytosol aminopeptidase (501 aa).

2 residues coordinate Mn(2+): lysine 267 and aspartate 272. Lysine 279 is an active-site residue. The Mn(2+) site is built by aspartate 290, aspartate 349, and glutamate 351. Arginine 353 is a catalytic residue.

This sequence belongs to the peptidase M17 family. Mn(2+) serves as cofactor.

It localises to the cytoplasm. The catalysed reaction is Release of an N-terminal amino acid, Xaa-|-Yaa-, in which Xaa is preferably Leu, but may be other amino acids including Pro although not Arg or Lys, and Yaa may be Pro. Amino acid amides and methyl esters are also readily hydrolyzed, but rates on arylamides are exceedingly low.. The enzyme catalyses Release of an N-terminal amino acid, preferentially leucine, but not glutamic or aspartic acids.. Its function is as follows. Presumably involved in the processing and regular turnover of intracellular proteins. Catalyzes the removal of unsubstituted N-terminal amino acids from various peptides. This Hamiltonella defensa subsp. Acyrthosiphon pisum (strain 5AT) protein is Probable cytosol aminopeptidase.